The following is a 547-amino-acid chain: Chaperonin GroEL (547 aa).

ATP is bound by residues Thr-30–Pro-33, Lys-51, Asp-87–Thr-91, Gly-415, and Asp-496. Residues Lys-527–Phe-547 form a disordered region. The segment covering Pro-534–Phe-547 has biased composition (gly residues).

Belongs to the chaperonin (HSP60) family. Forms a cylinder of 14 subunits composed of two heptameric rings stacked back-to-back. Interacts with the co-chaperonin GroES.

It localises to the cytoplasm. The enzyme catalyses ATP + H2O + a folded polypeptide = ADP + phosphate + an unfolded polypeptide.. Its function is as follows. Together with its co-chaperonin GroES, plays an essential role in assisting protein folding. The GroEL-GroES system forms a nano-cage that allows encapsulation of the non-native substrate proteins and provides a physical environment optimized to promote and accelerate protein folding. The chain is Chaperonin GroEL from Methylocella silvestris (strain DSM 15510 / CIP 108128 / LMG 27833 / NCIMB 13906 / BL2).